We begin with the raw amino-acid sequence, 346 residues long: Methylthioribose-1-phosphate isomerase (346 aa).

Substrate is bound by residues 46–48 (RGA), Arg89, and Gln196. Catalysis depends on Asp237, which acts as the Proton donor. 247–248 (NK) is a binding site for substrate.

This sequence belongs to the eIF-2B alpha/beta/delta subunits family. MtnA subfamily.

It catalyses the reaction 5-(methylsulfanyl)-alpha-D-ribose 1-phosphate = 5-(methylsulfanyl)-D-ribulose 1-phosphate. It participates in amino-acid biosynthesis; L-methionine biosynthesis via salvage pathway; L-methionine from S-methyl-5-thio-alpha-D-ribose 1-phosphate: step 1/6. Functionally, catalyzes the interconversion of methylthioribose-1-phosphate (MTR-1-P) into methylthioribulose-1-phosphate (MTRu-1-P). This chain is Methylthioribose-1-phosphate isomerase, found in Geotalea daltonii (strain DSM 22248 / JCM 15807 / FRC-32) (Geobacter daltonii).